A 265-amino-acid polypeptide reads, in one-letter code: 3-methyl-2-oxobutanoate hydroxymethyltransferase (265 aa).

Mg(2+) contacts are provided by Asp-46 and Asp-85. 3-methyl-2-oxobutanoate is bound by residues 46-47 (DS), Asp-85, and Lys-114. Glu-116 is a binding site for Mg(2+). The active-site Proton acceptor is Glu-183.

It belongs to the PanB family. Homodecamer; pentamer of dimers. It depends on Mg(2+) as a cofactor.

It is found in the cytoplasm. The enzyme catalyses 3-methyl-2-oxobutanoate + (6R)-5,10-methylene-5,6,7,8-tetrahydrofolate + H2O = 2-dehydropantoate + (6S)-5,6,7,8-tetrahydrofolate. It participates in cofactor biosynthesis; coenzyme A biosynthesis. Its function is as follows. Catalyzes the reversible reaction in which hydroxymethyl group from 5,10-methylenetetrahydrofolate is transferred onto alpha-ketoisovalerate to form ketopantoate. The polypeptide is 3-methyl-2-oxobutanoate hydroxymethyltransferase (Pyrobaculum calidifontis (strain DSM 21063 / JCM 11548 / VA1)).